Consider the following 314-residue polypeptide: Three-prime repair exonuclease 1 (314 aa).

Residues aspartate 18 and glutamate 20 each coordinate Mg(2+). Position 20 to 21 (20 to 21 (EA)) interacts with substrate. Serine 78 is subject to Phosphoserine. Tyrosine 129 is a substrate binding site. Phosphoserine is present on serine 167. Histidine 195 acts as the Proton donor/acceptor in catalysis. Aspartate 200 contacts Mg(2+). A substrate-binding site is contributed by aspartate 200. A necessary for endoplasmic reticulum localization region spans residues 236 to 314 (TASARTKPRP…YGLSLATPGE (79 aa)). The disordered stretch occupies residues 240–278 (RTKPRPSAVTTTAHLATTRNTSPSLGESRGTKDLPPVKD). The tract at residues 243 to 314 (PRPSAVTTTA…YGLSLATPGE (72 aa)) is interaction with UBQLN1. Residues 247 to 260 (AVTTTAHLATTRNT) are compositionally biased toward low complexity. A Phosphoserine modification is found at serine 261. Positions 281–314 (ALSREGLLAPLGLLAILTLAVATLYGLSLATPGE) are necessary for cytoplasmic retention.

The protein belongs to the exonuclease superfamily. TREX family. Homodimer. Interacts (via proline-rich region) with TCERG1/CA150 (via the second WW domain). Component of the SET complex, composed of at least ANP32A, APEX1, HMGB2, NME1, SET and TREX1. Within this complex, directly interacts with SET; this interaction does not result in TREX1 inhibition. Also interacts with NME1, but only following translocation to the nucleus. Directly interacts with UBQLN1 (via ubiquitin-like domain); the interaction may control TREX1 subcellular location. Mg(2+) is required as a cofactor. In terms of processing, ubiquitinated, but not targeted to proteasomal degradation. Ubiquitination may be important for interaction with UBQLN1. Detected in thymus, spleen, liver, brain, heart, small intestine and colon.

Its subcellular location is the nucleus. The protein localises to the cytoplasm. It localises to the cytosol. The protein resides in the endoplasmic reticulum membrane. The enzyme catalyses Exonucleolytic cleavage in the 3'- to 5'-direction to yield nucleoside 5'-phosphates.. Major cellular 3'-to-5' DNA exonuclease which digests single-stranded DNA (ssDNA) and double-stranded DNA (dsDNA) with mismatched 3' termini. Prevents cell-intrinsic initiation of autoimmunity. Acts by metabolizing DNA fragments from endogenous retroelements, including L1, LTR and SINE elements. Plays a key role in degradation of DNA fragments at cytosolic micronuclei arising from genome instability: its association with the endoplasmic reticulum membrane directs TREX1 to ruptured micronuclei, leading to micronuclear DNA degradation. Micronuclear DNA degradation is required to limit CGAS activation and subsequent inflammation. Unless degraded, these DNA fragments accumulate in the cytosol and activate the cGAS-STING innate immune signaling, leading to the production of type I interferon. Prevents chronic ATM-dependent checkpoint activation, by processing ssDNA polynucleotide species arising from the processing of aberrant DNA replication intermediates. Inefficiently degrades oxidized DNA, such as that generated upon antimicrobial reactive oxygen production or upon absorption of UV light. During GZMA-mediated cell death, contributes to DNA damage in concert with NME1. NME1 nicks one strand of DNA and TREX1 removes bases from the free 3' end to enhance DNA damage and prevent DNA end reannealing and rapid repair. In Homo sapiens (Human), this protein is Three-prime repair exonuclease 1.